We begin with the raw amino-acid sequence, 106 residues long: Urease subunit beta (106 aa).

It belongs to the urease beta subunit family. As to quaternary structure, heterotrimer of UreA (gamma), UreB (beta) and UreC (alpha) subunits. Three heterotrimers associate to form the active enzyme.

It is found in the cytoplasm. It carries out the reaction urea + 2 H2O + H(+) = hydrogencarbonate + 2 NH4(+). The protein operates within nitrogen metabolism; urea degradation; CO(2) and NH(3) from urea (urease route): step 1/1. In Acinetobacter baumannii (strain ATCC 17978 / DSM 105126 / CIP 53.77 / LMG 1025 / NCDC KC755 / 5377), this protein is Urease subunit beta.